The primary structure comprises 440 residues: Frizzled/smoothened-like sans CRD protein D (440 aa).

A signal peptide spans 1–27 (MFIILKFLISFFLICNFFNYNDHFASG). At 28–85 (QTLPPGFCPSPLIYRNSTNRQNDIENGYLFIGQTNCTSPCPSLIFSENEWHRVYNMSL) the chain is on the extracellular side. Asn43, Asn62, and Asn82 each carry an N-linked (GlcNAc...) asparagine glycan. Residues 86 to 106 (IAGTISMFALIFLIITYSPLV) form a helical membrane-spanning segment. At 107–110 (NKYN) the chain is on the cytoplasmic side. The chain crosses the membrane as a helical span at residues 111-131 (GYTRHTVGILFLFCGIFLTVT). Residues 132–162 (TDGRQLWDIDLGFEKYCPEPGRFARQSDTKC) are Extracellular-facing. A helical membrane pass occupies residues 163–183 (LVTAIFFQYGCVTSILWWAAI). The Cytoplasmic segment spans residues 184 to 200 (SVDLWMTIRKVKISKLQ). Residues 201-221 (FITYAVILNIITLILTFAPIA) form a helical membrane-spanning segment. The Extracellular segment spans residues 222-244 (SKQYGYGEAAIGCWLMDLKYQVG). Residues 245–265 (YFWAPVGFCLCVGCVSIVLII) form a helical membrane-spanning segment. At 266-285 (REIYKVSDAIKKKLLAKHLK) the chain is on the cytoplasmic side. Residues 286–306 (PLMLIILMLSEFIYMFIFYSY) form a helical membrane-spanning segment. Over 307 to 346 (TTSRRGHYHDVVEKYIRCLFINASNPSICEVDVSISSPAH) the chain is Extracellular. Asn328 carries an N-linked (GlcNAc...) asparagine glycan. Residues 347–367 (FFFHFCMRLMGIEGLIFFGFT) traverse the membrane as a helical segment. At 368 to 440 (RQTKRIWLRS…IELSGVDSKN (73 aa)) the chain is on the cytoplasmic side. A disordered region spans residues 395–428 (ISSDEKTSNSSHRTTRGCRETEFGESIEQSNDPE).

Belongs to the G-protein coupled receptor Fz/Smo family.

Its subcellular location is the membrane. The sequence is that of Frizzled/smoothened-like sans CRD protein D (fscD) from Dictyostelium discoideum (Social amoeba).